Here is a 307-residue protein sequence, read N- to C-terminus: NAD kinase 1 (307 aa).

Asp-67 functions as the Proton acceptor in the catalytic mechanism. NAD(+) contacts are provided by residues 67–68 (DG), 149–150 (NE), Arg-160, Asp-181, and 192–197 (TCYTSS).

This sequence belongs to the NAD kinase family. It depends on a divalent metal cation as a cofactor.

The protein localises to the cytoplasm. It catalyses the reaction NAD(+) + ATP = ADP + NADP(+) + H(+). Involved in the regulation of the intracellular balance of NAD and NADP, and is a key enzyme in the biosynthesis of NADP. Catalyzes specifically the phosphorylation on 2'-hydroxyl of the adenosine moiety of NAD to yield NADP. Essential for photoheterotrophic growth. Has a significant function in the oxidative pentose phosphate (OPP) pathway for glucose catabolism under photoheterotrophic conditions. Is also involved in cellular redox homeostasis. This chain is NAD kinase 1, found in Synechocystis sp. (strain ATCC 27184 / PCC 6803 / Kazusa).